The primary structure comprises 524 residues: DEAD-box ATP-dependent RNA helicase CshA (524 aa).

A Q motif motif is present at residues 1–29 (MKFNELNLSADLLAEIEKAGFVEASPIQE). The Helicase ATP-binding domain maps to 32 to 202 (IPLALEGKDV…VQFMKAPEHV (171 aa)). 45–52 (AQTGTGKT) serves as a coordination point for ATP. Positions 150-153 (DEAD) match the DEAD box motif. The Helicase C-terminal domain occupies 213 to 373 (LVDQYYIRVK…GLKPASVEES (161 aa)). The disordered stretch occupies residues 440-524 (EKPLPFKPSG…GFVIRNKGDK (85 aa)). A compositionally biased stretch (basic and acidic residues) spans 463–498 (RRGDDRRERDRRGNGRRDEFKKGSRGNDRFDKEKRY).

The protein belongs to the DEAD box helicase family. CshA subfamily. In terms of assembly, oligomerizes, may be a member of the RNA degradosome.

It localises to the cytoplasm. It carries out the reaction ATP + H2O = ADP + phosphate + H(+). Its function is as follows. DEAD-box RNA helicase possibly involved in RNA degradation. Unwinds dsRNA in both 5'- and 3'-directions, has RNA-dependent ATPase activity. The chain is DEAD-box ATP-dependent RNA helicase CshA from Streptococcus pneumoniae serotype 4 (strain ATCC BAA-334 / TIGR4).